We begin with the raw amino-acid sequence, 309 residues long: Minor serine/threonine-protein phosphatase PP2A-1 catalytic subunit (309 aa).

Mn(2+) contacts are provided by aspartate 57, histidine 59, aspartate 85, and asparagine 117. The active-site Proton donor is the histidine 118. Mn(2+) contacts are provided by histidine 167 and histidine 241. Leucine 309 bears the Leucine methyl ester mark.

It belongs to the PPP phosphatase family. PP-2A subfamily. The cofactor is Mn(2+).

It carries out the reaction O-phospho-L-seryl-[protein] + H2O = L-seryl-[protein] + phosphate. The catalysed reaction is O-phospho-L-threonyl-[protein] + H2O = L-threonyl-[protein] + phosphate. In terms of biological role, essential role in cell cycle control. PP2A may be involved in controlling the entry into mitosis, possibly acting as an inhibitor. The protein is Minor serine/threonine-protein phosphatase PP2A-1 catalytic subunit (ppa1) of Schizosaccharomyces pombe (strain 972 / ATCC 24843) (Fission yeast).